The chain runs to 481 residues: p-aminobenzoyl-glutamate hydrolase subunit B (481 aa).

In terms of assembly, forms a heterodimer with AbgA. The cofactor is Mn(2+).

Its function is as follows. Component of the p-aminobenzoyl-glutamate hydrolase multicomponent enzyme system which catalyzes the cleavage of p-aminobenzoyl-glutamate (PABA-GLU) to form p-aminobenzoate (PABA) and glutamate. AbgAB does not degrade dipeptides and the physiological role of abgABT should be clarified. The chain is p-aminobenzoyl-glutamate hydrolase subunit B (abgB) from Escherichia coli (strain K12).